The sequence spans 345 residues: Leucine-rich repeat-containing protein 69 (345 aa).

LRR repeat units follow at residues 13-34, 36-58, 59-80, 82-103, 106-127, 129-151, 152-173, 175-196, 198-219, and 220-241; these read KAKTLNLNGKRLQRVPVAVGCL, SLTELQLKNNLLCRLPVELSALC, RLRVLHLGNNHFEKVPEEIKYL, CLERLHLFGNRISEIPAAALDG, NLLFLNLNNNLLEHLPREIYKL, SLETLSINNNHMKAIPKELCFLQ, NLQELHLANNQLDSLPDELSYL, NLKELRLSRNQLTGLPEGICKL, KLKILDVAGNFIRSFPSAMHRV, and PLTELYCEENPLLEKQPVFARQ.

This sequence belongs to the LRRC69 family.

The chain is Leucine-rich repeat-containing protein 69 (lrrc69) from Xenopus laevis (African clawed frog).